Reading from the N-terminus, the 183-residue chain is Interleukin-36 beta (183 aa).

A propeptide spanning residues methionine 1–glycine 30 is cleaved from the precursor.

Belongs to the IL-1 family. In terms of assembly, interacts with cargo receptor TMED10; the interaction mediates the translocation from the cytoplasm into the ERGIC (endoplasmic reticulum-Golgi intermediate compartment) and thereby secretion. N-terminal truncation leads to a dramatic enhancement of its activity (&gt;1000-fold).

It localises to the cytoplasm. Its subcellular location is the secreted. In terms of biological role, cytokine that binds to and signals through the IL1RL2/IL-36R receptor which in turn activates NF-kappa-B and MAPK signaling pathways in target cells linked to a pro-inflammatory response. Part of the IL-36 signaling system that is thought to be present in epithelial barriers and to take part in local inflammatory response; similar to the IL-1 system with which it shares the coreceptor IL1RAP. Stimulates production of interleukin-6 and interleukin-8 in synovial fibrobasts, articular chondrocytes and mature adipocytes. Induces expression of a number of antimicrobial peptides including beta-defensin 4 and beta-defensin 103 as well as a number of matrix metalloproteases. Seems to be involved in skin inflammatory response by acting on keratinocytes, dendritic cells and indirectly on T-cells to drive tissue infiltration, cell maturation and cell proliferation. Induces the production of pro-inflammatory cytokines in bone marrow-derived dendritic cells (BMDCs), including IL-12, Il-1 beta, IL-6, TNF-alpha and IL-23, and activates p38 MAPK phosphorylation in BMDCs. Involved in dendritic cell maturation by stimulating the surface expression of CD80, CD86 and MHC class II. Induces the production of IFN-gamma, IL-4 and IL-17 by T-helper 1 (Th1) cells, cultured CD4(+) T-cells and splenocytes. In Mus musculus (Mouse), this protein is Interleukin-36 beta.